Consider the following 441-residue polypeptide: Asparagine--tRNA ligase, mitochondrial (441 aa).

Belongs to the class-II aminoacyl-tRNA synthetase family.

It localises to the mitochondrion. The enzyme catalyses tRNA(Asn) + L-asparagine + ATP = L-asparaginyl-tRNA(Asn) + AMP + diphosphate + H(+). The protein is Asparagine--tRNA ligase, mitochondrial (slm5) of Schizosaccharomyces pombe (strain 972 / ATCC 24843) (Fission yeast).